The following is a 276-amino-acid chain: Large ribosomal subunit protein uL2 (276 aa).

Positions 223 to 276 (GVAMNPVDHPHGGGEGRGKGHHPTSPWGLPTKGYKTRRGKRPSDKFIVRRRNEV) are disordered. Composition is skewed to basic and acidic residues over residues 230–240 (DHPHGGGEGRG) and 263–276 (RPSD…RNEV).

This sequence belongs to the universal ribosomal protein uL2 family. As to quaternary structure, part of the 50S ribosomal subunit. Forms a bridge to the 30S subunit in the 70S ribosome.

Functionally, one of the primary rRNA binding proteins. Required for association of the 30S and 50S subunits to form the 70S ribosome, for tRNA binding and peptide bond formation. It has been suggested to have peptidyltransferase activity; this is somewhat controversial. Makes several contacts with the 16S rRNA in the 70S ribosome. The sequence is that of Large ribosomal subunit protein uL2 from Thermotoga maritima (strain ATCC 43589 / DSM 3109 / JCM 10099 / NBRC 100826 / MSB8).